Here is a 333-residue protein sequence, read N- to C-terminus: Probable G-protein coupled receptor 33 (333 aa).

Residues 1–30 (MDLINSTDYLINASTLVRNSTQFLAPASKM) lie on the Extracellular side of the membrane. Residues Asn5, Asn12, and Asn19 are each glycosylated (N-linked (GlcNAc...) asparagine). Residues 31–53 (IIALSLYISSIIGTITNGLYLWV) form a helical membrane-spanning segment. Residues 54-64 (LRFKMKQTVNT) lie on the Cytoplasmic side of the membrane. The helical transmembrane segment at 65–86 (LLFFHLILSYFISTMILPFMAT) threads the bilayer. The Extracellular segment spans residues 87–103 (SQLQDNHWNFGTALCKV). The cysteines at positions 101 and 179 are disulfide-linked. A helical transmembrane segment spans residues 104-124 (FNGTLSLGMFTSVFFLSAIGL). The Cytoplasmic segment spans residues 125–143 (DRYLLTLHPVWSQQHRTPR). Residues 144 to 165 (WASSIVLGVWISAAALSIPYLI) traverse the membrane as a helical segment. Topologically, residues 166–209 (FRQTHHDRKGKVTCQNNYAVSTNWESKEMQALRQWIHVACFISR) are extracellular. Residues 210–230 (FLLGFLLPFFIIIFCYERVAS) traverse the membrane as a helical segment. The Cytoplasmic portion of the chain corresponds to 231–246 (KVKERSLFKSSKPFKV). The helical transmembrane segment at 247-268 (MMTAIISFFVCWMPYHIHQGLL) threads the bilayer. Topologically, residues 269 to 283 (LTMNQSLLLELTLIL) are extracellular. Residue Asn272 is glycosylated (N-linked (GlcNAc...) asparagine). A helical membrane pass occupies residues 284–303 (TVLTTSFNTIFSPTLYLFVG). Residues 304–333 (ENFKKVFKKSILALFESTFSEDSSVERTQT) lie on the Cytoplasmic side of the membrane.

It belongs to the G-protein coupled receptor 1 family.

The protein localises to the cell membrane. In terms of biological role, orphan receptor; could be a chemoattractant receptor. This is Probable G-protein coupled receptor 33 (GPR33) from Pan paniscus (Pygmy chimpanzee).